A 295-amino-acid polypeptide reads, in one-letter code: Protease HtpX homolog (295 aa).

The next 2 helical transmembrane spans lie at 6–26 (IGLF…VTSV) and 40–60 (LSSL…VSLL). His-148 lines the Zn(2+) pocket. Residue Glu-149 is part of the active site. His-152 lines the Zn(2+) pocket. The next 2 membrane-spanning stretches (helical) occupy residues 163–183 (LIQG…SYAL) and 198–218 (ISNI…VAYF). Position 223 (Glu-223) interacts with Zn(2+).

The protein belongs to the peptidase M48B family. Zn(2+) serves as cofactor.

The protein localises to the cell inner membrane. The chain is Protease HtpX homolog from Leptospira borgpetersenii serovar Hardjo-bovis (strain JB197).